Here is a 290-residue protein sequence, read N- to C-terminus: Ribosomal large subunit pseudouridine synthase B (290 aa).

The region spanning 3 to 75 (EKLQKVLARA…ICRVLAYYKP (73 aa)) is the S4 RNA-binding domain. The active-site Nucleophile is the Asp-110. The tract at residues 256–290 (VEKDRRRMKANQIRRAVKRHSQVSGGRRSGGRNNG) is disordered.

This sequence belongs to the pseudouridine synthase RsuA family.

The enzyme catalyses uridine(2605) in 23S rRNA = pseudouridine(2605) in 23S rRNA. Functionally, responsible for synthesis of pseudouridine from uracil-2605 in 23S ribosomal RNA. The sequence is that of Ribosomal large subunit pseudouridine synthase B (rluB) from Escherichia coli O157:H7.